The following is a 280-amino-acid chain: Energy-coupling factor transporter ATP-binding protein EcfA1 (280 aa).

In terms of domain architecture, ABC transporter spans 6-241; that stretch reads LRTENISFQY…SHMLQEIGLD (236 aa). An ATP-binding site is contributed by 40 to 47; sequence GQNGSGKS.

Belongs to the ABC transporter superfamily. Energy-coupling factor EcfA family. Forms a stable energy-coupling factor (ECF) transporter complex composed of 2 membrane-embedded substrate-binding proteins (S component), 2 ATP-binding proteins (A component) and 2 transmembrane proteins (T component).

The protein resides in the cell membrane. ATP-binding (A) component of a common energy-coupling factor (ECF) ABC-transporter complex. Unlike classic ABC transporters this ECF transporter provides the energy necessary to transport a number of different substrates. The chain is Energy-coupling factor transporter ATP-binding protein EcfA1 from Bacillus cereus (strain ATCC 10987 / NRS 248).